The chain runs to 172 residues: uncharacterized protein (172 aa).

Helical transmembrane passes span 20 to 40 (LVLITISIIALSTAYIAEYIF), 48 to 68 (CVYERFPYLMLIKISLTALII), 76 to 96 (LILILITILSSCILSTYHSFV), and 146 to 166 (MTEYNLLLNICLLIFLGLILF).

It is found in the cell membrane. This is an uncharacterized protein from Rickettsia prowazekii (strain Madrid E).